Reading from the N-terminus, the 603-residue chain is Elongation factor 4 (603 aa).

The 183-residue stretch at 9–191 folds into the tr-type G domain; the sequence is SNIRNFSIIA…RIVRQIPPPK (183 aa). GTP contacts are provided by residues 21 to 26 and 138 to 141; these read DHGKST and NKID.

It belongs to the TRAFAC class translation factor GTPase superfamily. Classic translation factor GTPase family. LepA subfamily.

The protein resides in the cell inner membrane. It catalyses the reaction GTP + H2O = GDP + phosphate + H(+). Functionally, required for accurate and efficient protein synthesis under certain stress conditions. May act as a fidelity factor of the translation reaction, by catalyzing a one-codon backward translocation of tRNAs on improperly translocated ribosomes. Back-translocation proceeds from a post-translocation (POST) complex to a pre-translocation (PRE) complex, thus giving elongation factor G a second chance to translocate the tRNAs correctly. Binds to ribosomes in a GTP-dependent manner. This is Elongation factor 4 from Idiomarina loihiensis (strain ATCC BAA-735 / DSM 15497 / L2-TR).